Consider the following 375-residue polypeptide: Period circadian protein (375 aa).

Disordered stretches follow at residues 27–119, 140–189, and 219–255; these read VTAP…VPPV, KHRE…WEGE, and KCQA…QYTQ. The segment covering 69-91 has biased composition (low complexity); it reads SGNFTTGSNLHMSSVTNTSNAGT. Gly residues predominate over residues 92 to 113; it reads GTSGTGNSGGGGGGGGGAGPGN. Over residues 145–156 the composition is skewed to basic and acidic residues; the sequence is RGRSGEKNKKSA. The segment covering 224-243 has biased composition (gly residues); it reads GAGGGGSGSVGGTGNIGSGG. A compositionally biased stretch (polar residues) spans 245 to 255; sequence NAQPSTNQYTQ.

Forms a heterodimer with timeless (TIM); the complex then translocates into the nucleus. Post-translationally, phosphorylated with a circadian rhythmicity, probably by the double-time protein (dbt). Phosphorylation could be implicated in the stability of per monomer and in the formation of heterodimer per-tim.

The protein localises to the nucleus. It is found in the cytoplasm. The protein resides in the perinuclear region. In terms of biological role, essential for biological clock functions. Determines the period length of circadian and ultradian rhythms; an increase in PER dosage leads to shortened circadian rhythms and a decrease leads to lengthened circadian rhythms. Essential for the circadian rhythmicity of locomotor activity, eclosion behavior, and for the rhythmic component of the male courtship song that originates in the thoracic nervous system. The biological cycle depends on the rhythmic formation and nuclear localization of the TIM-PER complex. Light induces the degradation of TIM, which promotes elimination of PER. Nuclear activity of the heterodimer coordinatively regulates PER and TIM transcription through a negative feedback loop. Behaves as a negative element in circadian transcriptional loop. Does not appear to bind DNA, suggesting indirect transcriptional inhibition. The polypeptide is Period circadian protein (per) (Drosophila sucinea (Fruit fly)).